Reading from the N-terminus, the 123-residue chain is Small ribosomal subunit protein uS13 (123 aa).

The disordered stretch occupies residues Pro-97–Lys-123.

The protein belongs to the universal ribosomal protein uS13 family. Part of the 30S ribosomal subunit. Forms a loose heterodimer with protein S19. Forms two bridges to the 50S subunit in the 70S ribosome.

Its function is as follows. Located at the top of the head of the 30S subunit, it contacts several helices of the 16S rRNA. In the 70S ribosome it contacts the 23S rRNA (bridge B1a) and protein L5 of the 50S subunit (bridge B1b), connecting the 2 subunits; these bridges are implicated in subunit movement. Contacts the tRNAs in the A and P-sites. This chain is Small ribosomal subunit protein uS13, found in Ehrlichia canis (strain Jake).